We begin with the raw amino-acid sequence, 127 residues long: MARVKRAVNAHKKRRVVLERASGYRGQRSRLYRKAKEQLLHSFNYNFRDRKARKGDFRKLWIQRINAAVRAEGITYNRFIQGLRLAGIELDRRALAEIAVSDPDTFKTIVDAAKAALPEDVNAPVEA.

This sequence belongs to the bacterial ribosomal protein bL20 family.

In terms of biological role, binds directly to 23S ribosomal RNA and is necessary for the in vitro assembly process of the 50S ribosomal subunit. It is not involved in the protein synthesizing functions of that subunit. The chain is Large ribosomal subunit protein bL20 from Bifidobacterium longum (strain DJO10A).